The chain runs to 90 residues: MTSRAKSLFIFFFLISCTFMLLETDASRNKLSSYIPLCGSNTYCGGLWCPKKGGKYSCISMSCDIQEDCPKLVRCKNSPGPYCMEGFCTC.

An N-terminal signal peptide occupies residues 1–26 (MTSRAKSLFIFFFLISCTFMLLETDA). Cystine bridges form between cysteine 63-cysteine 83, cysteine 69-cysteine 88, and cysteine 75-cysteine 90.

The protein belongs to the DEFL family.

Its subcellular location is the secreted. This chain is Defensin-like protein 293, found in Arabidopsis thaliana (Mouse-ear cress).